A 515-amino-acid chain; its full sequence is Signal transduction histidine-protein kinase/phosphatase MprB (515 aa).

The Cytoplasmic portion of the chain corresponds to 1 to 24; it reads MTLPPPPSRLKPPRNTSSLSLRWR. The chain crosses the membrane as a helical span at residues 25–45; that stretch reads VMLLAMSMVAMVVVLMSVAVY. Residues 46–165 are Extracellular-facing; sequence AVVSRALYDD…TGQVLGRLGT (120 aa). The chain crosses the membrane as a helical span at residues 166–186; sequence VLLIVGGVGVAVAAIAGGMVA. The HAMP domain maps to 187 to 239; that stretch reads RAGLRPVGRLTQAAERVARTDDLRPIPVFGSDELARLTEAFNMMLRALTESRE. The Cytoplasmic portion of the chain corresponds to 187 to 515; it reads RAGLRPVGRL…GKSRSASKEL (329 aa). The Histidine kinase domain maps to 247–467; the sequence is DAGHELRTPL…SFYVMLPGRP (221 aa). A Phosphohistidine; by autocatalysis modification is found at H250. The tract at residues 468–515 is disordered; the sequence is LTPGGNGTAPVPAAQFDPDMRSAGSRADRRVIKNTETNGKSRSASKEL.

It depends on Mg(2+) as a cofactor. Mn(2+) serves as cofactor. Autophosphorylated.

The protein localises to the cell membrane. It carries out the reaction ATP + protein L-histidine = ADP + protein N-phospho-L-histidine.. Functionally, member of the two-component regulatory system MprB/MprA which contributes to maintaining a balance among several systems involved in stress resistance and is required for establishment and maintenance of persistent infection in the host. In response to environmental signals MprB acts both as a membrane-associated protein kinase that undergoes autophosphorylation and subsequently transfers the phosphate to MprA, and a protein phosphatase that dephosphorylates phospho-MprA. The polypeptide is Signal transduction histidine-protein kinase/phosphatase MprB (mprB) (Mycobacterium sp. (strain KMS)).